The primary structure comprises 452 residues: Exodeoxyribonuclease 7 large subunit (452 aa).

The protein belongs to the XseA family. As to quaternary structure, heterooligomer composed of large and small subunits.

Its subcellular location is the cytoplasm. It catalyses the reaction Exonucleolytic cleavage in either 5'- to 3'- or 3'- to 5'-direction to yield nucleoside 5'-phosphates.. In terms of biological role, bidirectionally degrades single-stranded DNA into large acid-insoluble oligonucleotides, which are then degraded further into small acid-soluble oligonucleotides. In Bacillus thuringiensis (strain Al Hakam), this protein is Exodeoxyribonuclease 7 large subunit.